A 150-amino-acid polypeptide reads, in one-letter code: Large ribosomal subunit protein bL9 (150 aa).

It belongs to the bacterial ribosomal protein bL9 family.

In terms of biological role, binds to the 23S rRNA. The sequence is that of Large ribosomal subunit protein bL9 from Streptococcus pneumoniae (strain CGSP14).